A 502-amino-acid polypeptide reads, in one-letter code: Probable malate:quinone oxidoreductase (502 aa).

Belongs to the MQO family. FAD is required as a cofactor.

It carries out the reaction (S)-malate + a quinone = a quinol + oxaloacetate. Its pathway is carbohydrate metabolism; tricarboxylic acid cycle; oxaloacetate from (S)-malate (quinone route): step 1/1. The protein is Probable malate:quinone oxidoreductase of Oceanobacillus iheyensis (strain DSM 14371 / CIP 107618 / JCM 11309 / KCTC 3954 / HTE831).